Consider the following 229-residue polypeptide: Cell division protein FtsQ (229 aa).

A helical membrane pass occupies residues 1–21; sequence MIVLLCVIFAFLVYSNWHSWL. At 22–229 the chain is on the periplasmic side; that stretch reads ESLDRNPIRA…AAVGFSPLPK (208 aa). The POTRA domain maps to 27–97; the sequence is NPIRAYALTH…DRLSITLIEH (71 aa).

Belongs to the FtsQ/DivIB family. FtsQ subfamily. As to quaternary structure, part of a complex composed of FtsB, FtsL and FtsQ.

It is found in the cell inner membrane. Its function is as follows. Essential cell division protein. May link together the upstream cell division proteins, which are predominantly cytoplasmic, with the downstream cell division proteins, which are predominantly periplasmic. May control correct divisome assembly. The sequence is that of Cell division protein FtsQ from Actinobacillus pleuropneumoniae serotype 3 (strain JL03).